The following is a 229-amino-acid chain: Protein FAM3C (229 aa).

The signal sequence occupies residues 1 to 24 (MRIAGAIKFVVAVALFLLTFYVIS). 2 disulfides stabilise this stretch: Cys59/Cys87 and Cys65/Cys222. The 159-residue stretch at 68 to 226 (KHFAFKIASG…VEMEGCIPQK (159 aa)) folds into the GG-type lectin domain.

This sequence belongs to the FAM3 family. Expressed in the retinal ganglion cell layer.

The protein resides in the secreted. Involved in retinal laminar formation. The sequence is that of Protein FAM3C (fam3c) from Xenopus laevis (African clawed frog).